Here is a 625-residue protein sequence, read N- to C-terminus: Chaperone protein HtpG (625 aa).

The a; substrate-binding stretch occupies residues 1–341; the sequence is MEKKQFQAES…SEDLSLNISR (341 aa). A b region spans residues 342–551; that stretch reads EMLQHDRQLK…DGEITLEMEK (210 aa). The c stretch occupies residues 552–625; sequence VLQAMPDNQN…FSQNMCKVMV (74 aa).

Belongs to the heat shock protein 90 family. Homodimer.

Its subcellular location is the cytoplasm. Its function is as follows. Molecular chaperone. Has ATPase activity. This Shouchella clausii (strain KSM-K16) (Alkalihalobacillus clausii) protein is Chaperone protein HtpG.